We begin with the raw amino-acid sequence, 117 residues long: Ig heavy chain V region 108A (117 aa).

Residues 1 to 19 (MGWSWIFLFLLSGTAGVHS) form the signal peptide. An Ig-like domain is found at 20–117 (EVQLQQSGPE…EDSAVYYCAR (98 aa)).

This Mus musculus (Mouse) protein is Ig heavy chain V region 108A (Igh-VJ558).